The following is an 814-amino-acid chain: Glycogen phosphorylase (814 aa).

An N6-(pyridoxal phosphate)lysine modification is found at Lys662.

Belongs to the glycogen phosphorylase family. Pyridoxal 5'-phosphate is required as a cofactor.

The catalysed reaction is [(1-&gt;4)-alpha-D-glucosyl](n) + phosphate = [(1-&gt;4)-alpha-D-glucosyl](n-1) + alpha-D-glucose 1-phosphate. Its function is as follows. Phosphorylase is an important allosteric enzyme in carbohydrate metabolism. Enzymes from different sources differ in their regulatory mechanisms and in their natural substrates. However, all known phosphorylases share catalytic and structural properties. This Chlamydia trachomatis serovar D (strain ATCC VR-885 / DSM 19411 / UW-3/Cx) protein is Glycogen phosphorylase (glgP).